The sequence spans 206 residues: Histidine biosynthesis bifunctional protein HisIE (206 aa).

A phosphoribosyl-AMP cyclohydrolase region spans residues 1-117; the sequence is MCNEPATSDV…SCFPAAPGQF (117 aa). The tract at residues 118 to 206 is phosphoribosyl-ATP pyrophosphohydrolase; that stretch reads LGALDALVAE…AVTVLEARHR (89 aa).

In the N-terminal section; belongs to the PRA-CH family. The protein in the C-terminal section; belongs to the PRA-PH family.

It localises to the cytoplasm. The catalysed reaction is 1-(5-phospho-beta-D-ribosyl)-ATP + H2O = 1-(5-phospho-beta-D-ribosyl)-5'-AMP + diphosphate + H(+). It catalyses the reaction 1-(5-phospho-beta-D-ribosyl)-5'-AMP + H2O = 1-(5-phospho-beta-D-ribosyl)-5-[(5-phospho-beta-D-ribosylamino)methylideneamino]imidazole-4-carboxamide. It functions in the pathway amino-acid biosynthesis; L-histidine biosynthesis; L-histidine from 5-phospho-alpha-D-ribose 1-diphosphate: step 2/9. It participates in amino-acid biosynthesis; L-histidine biosynthesis; L-histidine from 5-phospho-alpha-D-ribose 1-diphosphate: step 3/9. The chain is Histidine biosynthesis bifunctional protein HisIE (hisI) from Xylella fastidiosa (strain Temecula1 / ATCC 700964).